We begin with the raw amino-acid sequence, 470 residues long: Dihydrolipoyl dehydrogenase (470 aa).

FAD-binding positions include 39–47 (EKATLGGVC), K56, and A119. C47 and C52 are disulfide-bonded. Residues 183 to 187 (GGGYI), E206, and 272 to 275 (TVGR) each bind NAD(+). FAD-binding residues include D315 and A323. The active-site Proton acceptor is H447.

The protein belongs to the class-I pyridine nucleotide-disulfide oxidoreductase family. As to quaternary structure, homodimer. Component of two multienzyme complexes: pyruvate dehydrogenase complex and oxoglutarate dehydrogenase complex. FAD serves as cofactor.

The protein resides in the cytoplasm. The catalysed reaction is N(6)-[(R)-dihydrolipoyl]-L-lysyl-[protein] + NAD(+) = N(6)-[(R)-lipoyl]-L-lysyl-[protein] + NADH + H(+). Catalyzes the oxidation of dihydrolipoamide to lipoamide. This Bacillus subtilis (strain 168) protein is Dihydrolipoyl dehydrogenase (pdhD).